Reading from the N-terminus, the 283-residue chain is Octanoyl-[GcvH]:protein N-octanoyltransferase (283 aa).

Positions 42–248 constitute a BPL/LPL catalytic domain; that stretch reads GQSDAVVRTW…TLQSFGGELY (207 aa). The Acyl-thioester intermediate role is filled by cysteine 147.

It belongs to the octanoyltransferase LipL family.

It carries out the reaction N(6)-octanoyl-L-lysyl-[glycine-cleavage complex H protein] + L-lysyl-[lipoyl-carrier protein] = N(6)-octanoyl-L-lysyl-[lipoyl-carrier protein] + L-lysyl-[glycine-cleavage complex H protein]. The protein operates within protein modification; protein lipoylation via endogenous pathway; protein N(6)-(lipoyl)lysine from octanoyl-[acyl-carrier-protein]. Its function is as follows. Catalyzes the amidotransfer (transamidation) of the octanoyl moiety from octanoyl-GcvH to the lipoyl domain of the E2 subunit of lipoate-dependent enzymes. This Geobacillus kaustophilus (strain HTA426) protein is Octanoyl-[GcvH]:protein N-octanoyltransferase.